The sequence spans 229 residues: Large ribosomal subunit protein uL1 (229 aa).

This sequence belongs to the universal ribosomal protein uL1 family. As to quaternary structure, part of the 50S ribosomal subunit.

Functionally, binds directly to 23S rRNA. The L1 stalk is quite mobile in the ribosome, and is involved in E site tRNA release. Protein L1 is also a translational repressor protein, it controls the translation of the L11 operon by binding to its mRNA. In Thermus thermophilus (strain ATCC BAA-163 / DSM 7039 / HB27), this protein is Large ribosomal subunit protein uL1.